A 416-amino-acid chain; its full sequence is Imidazolonepropionase (416 aa).

Fe(3+)-binding residues include H81 and H83. The Zn(2+) site is built by H81 and H83. 4-imidazolone-5-propanoate is bound by residues R90, Y153, and H186. N-formimidoyl-L-glutamate is bound at residue Y153. H251 contacts Fe(3+). Residue H251 coordinates Zn(2+). Residue Q254 participates in 4-imidazolone-5-propanoate binding. D326 is a Fe(3+) binding site. D326 is a Zn(2+) binding site. Residues N328 and G330 each contribute to the N-formimidoyl-L-glutamate site. T331 is a binding site for 4-imidazolone-5-propanoate.

Belongs to the metallo-dependent hydrolases superfamily. HutI family. Zn(2+) serves as cofactor. Fe(3+) is required as a cofactor.

Its subcellular location is the cytoplasm. The catalysed reaction is 4-imidazolone-5-propanoate + H2O = N-formimidoyl-L-glutamate. Its pathway is amino-acid degradation; L-histidine degradation into L-glutamate; N-formimidoyl-L-glutamate from L-histidine: step 3/3. Catalyzes the hydrolytic cleavage of the carbon-nitrogen bond in imidazolone-5-propanoate to yield N-formimidoyl-L-glutamate. It is the third step in the universal histidine degradation pathway. The sequence is that of Imidazolonepropionase from Paracidovorax citrulli (strain AAC00-1) (Acidovorax citrulli).